A 353-amino-acid polypeptide reads, in one-letter code: S-adenosylmethionine:tRNA ribosyltransferase-isomerase (353 aa).

This sequence belongs to the QueA family. Monomer.

It localises to the cytoplasm. The catalysed reaction is 7-aminomethyl-7-carbaguanosine(34) in tRNA + S-adenosyl-L-methionine = epoxyqueuosine(34) in tRNA + adenine + L-methionine + 2 H(+). Its pathway is tRNA modification; tRNA-queuosine biosynthesis. Functionally, transfers and isomerizes the ribose moiety from AdoMet to the 7-aminomethyl group of 7-deazaguanine (preQ1-tRNA) to give epoxyqueuosine (oQ-tRNA). The protein is S-adenosylmethionine:tRNA ribosyltransferase-isomerase of Marinomonas sp. (strain MWYL1).